We begin with the raw amino-acid sequence, 310 residues long: MAAKEGSRIFVGGLSPEVTDRDLERAFSRFGDILDCQIMLERDTGRSRGFGFITFADRRAMDESIREMHGRDFGDRVISVNRAEPKLGRDDGESHGSRGGRDSGYSIAGKGSFGGGGGGGGRVGEDECFKCGRVGHWARDCPSAGGGRGGPVGGFSSRASAYGGSDGRVDRYADRDRYVDRERYIDDRYDGAARYGARDRFDSREAYIPRDRYASDRYAAPADRFAGGDRYSRGSDRYPPGSYDKARSFERDIAPSAGSDRYGGGRAGGPIRGGGEEGRGFRSRAGAPYERPSRSGGGGAYPSSSTFDRY.

The RRM domain occupies 7-85; sequence SRIFVGGLSP…RVISVNRAEP (79 aa). Serine 15 is modified (phosphoserine). The tract at residues 82 to 120 is disordered; the sequence is RAEPKLGRDDGESHGSRGGRDSGYSIAGKGSFGGGGGGG. Basic and acidic residues predominate over residues 83 to 101; that stretch reads AEPKLGRDDGESHGSRGGR. Over residues 111 to 120 the composition is skewed to gly residues; that stretch reads GSFGGGGGGG. The CCHC-type zinc finger occupies 128–143; it reads CFKCGRVGHWARDCPS. A disordered region spans residues 224 to 310; the sequence is RFAGGDRYSR…YPSSSTFDRY (87 aa). Basic and acidic residues-rich tracts occupy residues 226-236 and 244-253; these read AGGDRYSRGSD and DKARSFERDI. Residues 261-273 are compositionally biased toward gly residues; the sequence is RYGGGRAGGPIRG. Serine 295 carries the post-translational modification Phosphoserine.

Expressed in roots, rosette and cauline leaves, stems, floral buds and flowers.

The protein localises to the nucleus. Functionally, binds RNA and DNA sequences non-specifically. May be involved in tolerance to cold stress. In Arabidopsis thaliana (Mouse-ear cress), this protein is Glycine-rich RNA-binding protein RZ1C.